The primary structure comprises 363 residues: uncharacterized protein (363 aa).

Residues 109 to 329 (RAALRELRSR…VEELQAQTRE (221 aa)) adopt a coiled-coil conformation.

This is an uncharacterized protein from Homo sapiens (Human).